Here is a 906-residue protein sequence, read N- to C-terminus: Protein translocase subunit SecA (906 aa).

Residues Q86, 104 to 108, and D499 each bind ATP; that span reads GEGKT. The segment at 862–886 is disordered; sequence KPVVSRIDPKDRNPDDPTSWGRVSR. Zn(2+) is bound by residues C890, C892, C901, and H902.

It belongs to the SecA family. Monomer and homodimer. Part of the essential Sec protein translocation apparatus which comprises SecA, SecYEG and auxiliary proteins SecDF-YajC and YidC. Zn(2+) is required as a cofactor.

The protein resides in the cell inner membrane. Its subcellular location is the cytoplasm. It carries out the reaction ATP + H2O + cellular proteinSide 1 = ADP + phosphate + cellular proteinSide 2.. Functionally, part of the Sec protein translocase complex. Interacts with the SecYEG preprotein conducting channel. Has a central role in coupling the hydrolysis of ATP to the transfer of proteins into and across the cell membrane, serving both as a receptor for the preprotein-SecB complex and as an ATP-driven molecular motor driving the stepwise translocation of polypeptide chains across the membrane. The polypeptide is Protein translocase subunit SecA (Rickettsia africae (strain ESF-5)).